A 95-amino-acid polypeptide reads, in one-letter code: MGKYETIFILHPSLDEEGYKANVEKFKGVIENGGGVIENVDIWGKRKLAYEIKKVNEGYYTLITFNADPTLPKELDRVFRITDTVVRHIIVKDEK.

It belongs to the bacterial ribosomal protein bS6 family.

In terms of biological role, binds together with bS18 to 16S ribosomal RNA. This Clostridium kluyveri (strain NBRC 12016) protein is Small ribosomal subunit protein bS6.